The primary structure comprises 199 residues: Probable V-type proton ATPase 20 kDa proteolipid subunit (199 aa).

The Vacuolar segment spans residues 1-3 (MSL). A helical transmembrane segment spans residues 4–24 (FSTSLWTTTVMSIIVGLYMLF). Over 25–46 (HNSGESFDFGSFLLDTSPYTWG) the chain is Cytoplasmic. Residues 47–67 (LLGIASCVAFGIIGAAWGIFI) form a helical membrane-spanning segment. At 68 to 86 (CGTSILGGAVKAPRIKTKN) the chain is on the vacuolar side. Residues 87–107 (LISIIFCEVVAIYSLIIAIVF) form a helical membrane-spanning segment. At 108–130 (SAKINDINPAGFYTKSHYYTGFA) the chain is on the cytoplasmic side. A helical transmembrane segment spans residues 131–151 (LFWGGITVGLCNLICGVCVGI). Residues 152–170 (TGSSAALADAQDASLFVKV) are Vacuolar-facing. A helical membrane pass occupies residues 171 to 191 (LVVEIFGSVLGLFGLIVGLLI). The Cytoplasmic segment spans residues 192 to 199 (GGKASDFS).

Belongs to the V-ATPase proteolipid subunit family. V-ATPase is a heteromultimeric enzyme composed of a peripheral catalytic V1 complex (components A to H) attached to an integral membrane V0 proton pore complex (components: a, c, c', c'', d, e, f and VOA1). The decameric c-ring forms the proton-conducting pore, and is composed of eight proteolipid subunits c, one subunit c' and one subunit c''.

Its subcellular location is the vacuole membrane. Functionally, proton-conducting pore forming subunit of the V0 complex of vacuolar(H+)-ATPase (V-ATPase), a multisubunit enzyme composed of a peripheral complex (V1) that hydrolyzes ATP and a membrane integral complex (V0) that translocates protons. V-ATPase is responsible for acidifying and maintaining the pH of intracellular compartments. This is Probable V-type proton ATPase 20 kDa proteolipid subunit (vma16) from Schizosaccharomyces pombe (strain 972 / ATCC 24843) (Fission yeast).